The following is a 266-amino-acid chain: MVCLKLPGGSCMAALTVTLTVLSSPLALAGDTQPRFLEQAKCECHFLNGTERVWNLIRYIYNQEEYARYNSDLGEYQAVTELGRPDAEYWNSQKDLLERRRAEVDTYCRYNYGVVESFTVQRRVQPKVTVYPSKTQPLQHHNLLVCSVNGFYPGSIEVRWFRNGQEEKAGVVSTGLIQNGDWTFQTLVMLETVPRSGEVYTCQVEHPSMMSPLTVQWSARSESAQSKMLSGVGGFVLGLLFLGTGLFIYFRNQKGHSGLQPTGLLS.

Residues 1–29 form the signal peptide; it reads MVCLKLPGGSCMAALTVTLTVLSSPLALA. Residues 30-124 form a beta-1 region; it reads GDTQPRFLEQ…VESFTVQRRV (95 aa). Topologically, residues 30 to 227 are extracellular; the sequence is GDTQPRFLEQ…SARSESAQSK (198 aa). Intrachain disulfides connect Cys44-Cys108 and Cys146-Cys202. Asn48 carries an N-linked (GlcNAc...) asparagine glycan. Residues 125–227 form a beta-2 region; it reads QPKVTVYPSK…SARSESAQSK (103 aa). One can recognise an Ig-like C1-type domain in the interval 126–216; that stretch reads PKVTVYPSKT…PSMMSPLTVQ (91 aa). Residues 228–250 form a helical membrane-spanning segment; it reads MLSGVGGFVLGLLFLGTGLFIYF. At 251-266 the chain is on the cytoplasmic side; that stretch reads RNQKGHSGLQPTGLLS. Lys254 participates in a covalent cross-link: Glycyl lysine isopeptide (Lys-Gly) (interchain with G-Cter in ubiquitin).

This sequence belongs to the MHC class II family. In terms of assembly, heterodimer of an alpha and a beta subunit; also referred as MHC class II molecule. In the endoplasmic reticulum (ER) it forms a heterononamer; 3 MHC class II molecules bind to a CD74 homotrimer (also known as invariant chain or HLA class II histocompatibility antigen gamma chain). In the endosomal/lysosomal system; CD74 undergoes sequential degradation by various proteases; leaving a small fragment termed CLIP on each MHC class II molecule. MHC class II molecule interacts with HLA_DM, and HLA_DO in B-cells, in order to release CLIP and facilitate the binding of antigenic peptides. In terms of processing, ubiquitinated by MARCH1 and MARCH8 at Lys-254 leading to sorting into the endosome system and down-regulation of MHC class II. When associated with ubiquitination of the alpha subunit of HLA-DR: HLA-DRA 'Lys-244', the down-regulation of MHC class II may be highly effective.

The protein resides in the cell membrane. Its subcellular location is the endoplasmic reticulum membrane. The protein localises to the golgi apparatus. It localises to the trans-Golgi network membrane. It is found in the endosome membrane. The protein resides in the lysosome membrane. Its subcellular location is the late endosome membrane. In terms of biological role, binds peptides derived from antigens that access the endocytic route of antigen presenting cells (APC) and presents them on the cell surface for recognition by the CD4 T-cells. The peptide binding cleft accommodates peptides of 10-30 residues. The peptides presented by MHC class II molecules are generated mostly by degradation of proteins that access the endocytic route, where they are processed by lysosomal proteases and other hydrolases. Exogenous antigens that have been endocytosed by the APC are thus readily available for presentation via MHC II molecules, and for this reason this antigen presentation pathway is usually referred to as exogenous. As membrane proteins on their way to degradation in lysosomes as part of their normal turn-over are also contained in the endosomal/lysosomal compartments, exogenous antigens must compete with those derived from endogenous components. Autophagy is also a source of endogenous peptides, autophagosomes constitutively fuse with MHC class II loading compartments. In addition to APCs, other cells of the gastrointestinal tract, such as epithelial cells, express MHC class II molecules and CD74 and act as APCs, which is an unusual trait of the GI tract. To produce a MHC class II molecule that presents an antigen, three MHC class II molecules (heterodimers of an alpha and a beta chain) associate with a CD74 trimer in the ER to form a heterononamer. Soon after the entry of this complex into the endosomal/lysosomal system where antigen processing occurs, CD74 undergoes a sequential degradation by various proteases, including CTSS and CTSL, leaving a small fragment termed CLIP (class-II-associated invariant chain peptide). The removal of CLIP is facilitated by HLA-DM via direct binding to the alpha-beta-CLIP complex so that CLIP is released. HLA-DM stabilizes MHC class II molecules until primary high affinity antigenic peptides are bound. The MHC II molecule bound to a peptide is then transported to the cell membrane surface. In B-cells, the interaction between HLA-DM and MHC class II molecules is regulated by HLA-DO. Primary dendritic cells (DCs) also to express HLA-DO. Lysosomal microenvironment has been implicated in the regulation of antigen loading into MHC II molecules, increased acidification produces increased proteolysis and efficient peptide loading. This is HLA class II histocompatibility antigen, DR beta 4 chain (HLA-DRB4) from Homo sapiens (Human).